The chain runs to 442 residues: UBX domain-containing protein 6 (442 aa).

The segment at M1–A10 is mediates interaction with LMAN1. Residues K13–E111 are disordered. At S36 the chain carries Phosphoserine. Residues E51–L63 form a VCP/p97-interacting motif (VIM) region. Over residues A52–A61 the composition is skewed to low complexity. Residues E90 to V105 are compositionally biased toward polar residues. The 70-residue stretch at V175–E244 folds into the PUB domain. A UBX domain is found at R332–F408.

In terms of assembly, interacts with VCP through the PUB domain (via C-terminus) and VIM motif (via N-terminus); the interaction is direct. Forms a ternary complex with CAV1 and VCP. Interacts with SYVN1. Interacts with HERPUD1. Interacts with VCPKMT. May interact with DERL1. Interacts with PLAA, VCP and YOD1; may form a complex involved in macroautophagy. Interacts with LMAN1. Widely expressed (at protein level). Highest expression in brain (at protein level).

It localises to the cytoplasm. It is found in the cytosol. Its subcellular location is the membrane. The protein resides in the nucleus. The protein localises to the cytoskeleton. It localises to the microtubule organizing center. It is found in the centrosome. Its subcellular location is the early endosome membrane. The protein resides in the late endosome membrane. The protein localises to the lysosome membrane. In terms of biological role, may negatively regulate the ATPase activity of VCP, an ATP-driven segregase that associates with different cofactors to control a wide variety of cellular processes. As a cofactor of VCP, it may play a role in the transport of CAV1 to lysosomes for degradation. It may also play a role in endoplasmic reticulum-associated degradation (ERAD) of misfolded proteins. Together with VCP and other cofactors, it may play a role in macroautophagy, regulating for instance the clearance of damaged lysosomes. The protein is UBX domain-containing protein 6 of Mus musculus (Mouse).